The primary structure comprises 405 residues: uncharacterized protein (405 aa).

12 helical membrane-spanning segments follow: residues 3–23, 42–62, 73–93, 95–115, 135–155, 162–182, 209–229, 248–268, 280–300, 309–329, 346–366, and 377–397; these read IIAK…PTTE, GITQ…ILTL, PIAL…IFAV, IEML…GSVI, SLSP…GYII, YVFV…YKVL, ILWL…GFFI, KLAF…GYLI, GLGF…AFIL, LAIA…NLLI, TAGS…TYLV, and FALL…CIWV.

Belongs to the major facilitator superfamily. Bcr/CmlA family.

The protein resides in the cell inner membrane. This is an uncharacterized protein from Rickettsia felis (strain ATCC VR-1525 / URRWXCal2) (Rickettsia azadi).